Here is a 103-residue protein sequence, read N- to C-terminus: Ghrelin (103 aa).

Residues 1-26 (MPLRRRASHMFVLLCALSLCVESVKG) form the signal peptide. The tract at residues 27–51 (GTSFLSPAQKPQGRRPPRMGRRDVA) is disordered. S29 carries the O-decanoyl serine; alternate lipid modification. S29 carries O-hexanoyl serine; alternate lipidation. A lipid anchor (O-octanoyl serine; alternate) is attached at S29. Glutamine amide is present on Q38. M45 carries the post-translational modification Methionine amide. The propeptide at 49 to 103 (DVAEPEIPVIKEDDQFMMSAPFELSVSLSEAEYEKYGPVLQKVLVNLLGDSPLEF) is removed in mature form.

It belongs to the motilin family. O-octanoylated by GOAT/MBOAT4. O-octanoylation or O-decanoylation is essential for activity. The O-decanoylated form differs in the length of the carbon backbone of the carboxylic acid forming an ester bond with Ser-29. Expressed in the telencephalon, hypothalamus, pituitary, intestine, liver, spleen and gill, with expression strongest in the intestine.

The protein resides in the secreted. In terms of biological role, ligand for growth hormone secretagogue receptor type 1 (GHSR). Induces the release of growth hormone from the pituitary. Induces adiposity and stimulates gastric acid secretion. Involved in growth regulation. Has an appetite-stimulating effect. The chain is Ghrelin (ghrl) from Carassius auratus (Goldfish).